The following is a 257-amino-acid chain: 5'-nucleotidase SurE (257 aa).

A divalent metal cation contacts are provided by D8, D9, S40, and N92.

The protein belongs to the SurE nucleotidase family. The cofactor is a divalent metal cation.

The protein localises to the cytoplasm. It carries out the reaction a ribonucleoside 5'-phosphate + H2O = a ribonucleoside + phosphate. Nucleotidase that shows phosphatase activity on nucleoside 5'-monophosphates. This is 5'-nucleotidase SurE from Rhizobium rhizogenes (strain K84 / ATCC BAA-868) (Agrobacterium radiobacter).